The following is a 100-amino-acid chain: Large ribosomal subunit protein eL36B (100 aa).

It belongs to the eukaryotic ribosomal protein eL36 family. In terms of assembly, component of the large ribosomal subunit (LSU). Mature yeast ribosomes consist of a small (40S) and a large (60S) subunit. The 40S small subunit contains 1 molecule of ribosomal RNA (18S rRNA) and 33 different proteins (encoded by 57 genes). The large 60S subunit contains 3 rRNA molecules (25S, 5.8S and 5S rRNA) and 46 different proteins (encoded by 81 genes).

It localises to the cytoplasm. Its function is as follows. Component of the ribosome, a large ribonucleoprotein complex responsible for the synthesis of proteins in the cell. The small ribosomal subunit (SSU) binds messenger RNAs (mRNAs) and translates the encoded message by selecting cognate aminoacyl-transfer RNA (tRNA) molecules. The large subunit (LSU) contains the ribosomal catalytic site termed the peptidyl transferase center (PTC), which catalyzes the formation of peptide bonds, thereby polymerizing the amino acids delivered by tRNAs into a polypeptide chain. The nascent polypeptides leave the ribosome through a tunnel in the LSU and interact with protein factors that function in enzymatic processing, targeting, and the membrane insertion of nascent chains at the exit of the ribosomal tunnel. The sequence is that of Large ribosomal subunit protein eL36B from Saccharomyces cerevisiae (strain ATCC 204508 / S288c) (Baker's yeast).